The primary structure comprises 505 residues: 4-trimethylaminobutyraldehyde dehydrogenase (505 aa).

Residues K191 and 243 to 247 (GSVPT) each bind NAD(+). Catalysis depends on E265, which acts as the Proton acceptor. The Nucleophile role is filled by C299. E402 is a binding site for NAD(+).

It belongs to the aldehyde dehydrogenase family. In terms of assembly, homotetramer. As to expression, constitutively expressed in all organs tested: brain, eye, gill, GI, heart, liver, kidney, muscle, skin, testis and ovary.

The protein resides in the cytoplasm. The protein localises to the cytosol. It catalyses the reaction 4-(trimethylamino)butanal + NAD(+) + H2O = 4-(trimethylamino)butanoate + NADH + 2 H(+). It carries out the reaction an aldehyde + NAD(+) + H2O = a carboxylate + NADH + 2 H(+). It functions in the pathway amine and polyamine biosynthesis; carnitine biosynthesis. Its function is as follows. Converts gamma-trimethylaminobutyraldehyde into gamma-butyrobetaine with high efficiency (in vitro). Can catalyze the irreversible oxidation of a broad range of aldehydes to the corresponding acids in an NAD-dependent reaction, but with low efficiency. The polypeptide is 4-trimethylaminobutyraldehyde dehydrogenase (aldh9A1) (Oryzias latipes (Japanese rice fish)).